We begin with the raw amino-acid sequence, 253 residues long: 5-oxoprolinase subunit A (253 aa).

The protein belongs to the LamB/PxpA family. As to quaternary structure, forms a complex composed of PxpA, PxpB and PxpC.

It catalyses the reaction 5-oxo-L-proline + ATP + 2 H2O = L-glutamate + ADP + phosphate + H(+). Functionally, catalyzes the cleavage of 5-oxoproline to form L-glutamate coupled to the hydrolysis of ATP to ADP and inorganic phosphate. This Bacillus thuringiensis subsp. konkukian (strain 97-27) protein is 5-oxoprolinase subunit A.